The following is an 85-amino-acid chain: Large ribosomal subunit protein bL31B (85 aa).

Belongs to the bacterial ribosomal protein bL31 family. Type B subfamily. As to quaternary structure, part of the 50S ribosomal subunit.

The polypeptide is Large ribosomal subunit protein bL31B (Aliivibrio salmonicida (strain LFI1238) (Vibrio salmonicida (strain LFI1238))).